The chain runs to 595 residues: Aspartate--tRNA ligase (595 aa).

Residue Glu173 participates in L-aspartate binding. Residues 197-200 (QLFK) are aspartate. Arg219 serves as a coordination point for L-aspartate. Residues 219–221 (RDE) and Gln228 each bind ATP. Position 449 (His449) interacts with L-aspartate. Glu483 contributes to the ATP binding site. An L-aspartate-binding site is contributed by Arg490. Position 535 to 538 (535 to 538 (GLDR)) interacts with ATP.

Belongs to the class-II aminoacyl-tRNA synthetase family. Type 1 subfamily. In terms of assembly, homodimer.

Its subcellular location is the cytoplasm. It carries out the reaction tRNA(Asp) + L-aspartate + ATP = L-aspartyl-tRNA(Asp) + AMP + diphosphate. In terms of biological role, catalyzes the attachment of L-aspartate to tRNA(Asp) in a two-step reaction: L-aspartate is first activated by ATP to form Asp-AMP and then transferred to the acceptor end of tRNA(Asp). This is Aspartate--tRNA ligase from Shewanella woodyi (strain ATCC 51908 / MS32).